The primary structure comprises 454 residues: MGAMLNLLLVVTVILCSILSPTRFMIMIDKMVADGYDPLDPFGKIIIKWDLLLSSPGQHHVQVTLENMQEYRHVEKPGWKLSWHWLNQEVIWDMKGAETTEQGNCSAFASSGNLPHCCLERPTIVDLLPGASLNVQVANCCRGGVLTSMSQDHANHVSAFHMTVGSSPDGPEEFNMPSNFDIGVPGYSCDNATSVSPTKFSTDKGRRKTQALATWEAVCVYSQFRSSPSPKCCVSLSAFYYQNIVPCPTCSCGCSSSHCVKDGELPPYLEQKHDPDEEVSPVVKCSDHMCPIRIHWHVKVNYREYWRVKITATNFNTMKNYTNWNLVVLHPNLKSVQQVFSFNYKSLTPYQNSINDTGMFWGVQFYNDVLLQEGKIGNVQTELLLKKDMGNFTFREGWAFPRRILFNGDECVMPSPDDFPRLPKSAHSSSSSSAVISSVSVVFCFLLHHLLLLV.

Positions 1–24 (MGAMLNLLLVVTVILCSILSPTRF) are cleaved as a signal peptide. Residues Asn104, Asn191, Asn320, Asn355, and Asn391 are each glycosylated (N-linked (GlcNAc...) asparagine). Ser429 is lipidated: GPI-anchor amidated serine. The propeptide at 430–454 (SSSSAVISSVSVVFCFLLHHLLLLV) is removed in mature form.

The protein belongs to the COBRA family. In terms of tissue distribution, expressed in flowers and siliques.

The protein resides in the cell membrane. The sequence is that of COBRA-like protein 6 (COBL6) from Arabidopsis thaliana (Mouse-ear cress).